A 224-amino-acid polypeptide reads, in one-letter code: V-type ATP synthase subunit D (224 aa).

Residues 190–224 (REAGYTQKKIKAKIEGKNKEAREAAAATSHGSAAD) are disordered. The span at 201-212 (AKIEGKNKEARE) shows a compositional bias: basic and acidic residues. Residues 213-224 (AAAATSHGSAAD) show a composition bias toward low complexity.

This sequence belongs to the V-ATPase D subunit family.

Produces ATP from ADP in the presence of a proton gradient across the membrane. The sequence is that of V-type ATP synthase subunit D (atpD) from Deinococcus radiodurans (strain ATCC 13939 / DSM 20539 / JCM 16871 / CCUG 27074 / LMG 4051 / NBRC 15346 / NCIMB 9279 / VKM B-1422 / R1).